The chain runs to 1051 residues: Inactive tyrosine-protein kinase 7 (1051 aa).

An N-terminal signal peptide occupies residues 1–22; that stretch reads MAALRALLLLLAVGAQAAIRFA. Ig-like C2-type domains are found at residues 23 to 105, 115 to 204, 213 to 298, 308 to 388, 393 to 472, 487 to 566, and 573 to 661; these read KEPY…ANAS, SVVL…DNFT, PQAV…KATL, PFSP…LSIT, PKWV…GSIE, PPPQ…ATVQ, and VTFK…AFLY. Residues 23-685 lie on the Extracellular side of the membrane; sequence KEPYSQDALH…SHTPYKMIQT (663 aa). A disulfide bridge links cysteine 40 with cysteine 88. Asparagine 103 carries N-linked (GlcNAc...) asparagine glycosylation. Cysteine 137 and cysteine 187 form a disulfide bridge. N-linked (GlcNAc...) asparagine glycosylation is found at asparagine 202, asparagine 255, and asparagine 264. 5 cysteine pairs are disulfide-bonded: cysteine 234–cysteine 282, cysteine 326–cysteine 372, cysteine 414–cysteine 462, cysteine 505–cysteine 551, and cysteine 594–cysteine 645. N-linked (GlcNAc...) asparagine glycans are attached at residues asparagine 444, asparagine 548, and asparagine 627. A helical transmembrane segment spans residues 686 to 706; that stretch reads IGLSVGAAVAYIIIVLGLMFY. The Cytoplasmic segment spans residues 707–1051; sequence CKKRRKAKRL…LGDSPADSKA (345 aa). A Protein kinase; inactive domain is found at 777–1048; sequence LQTITTLGRG…AAALGDSPAD (272 aa).

The protein belongs to the protein kinase superfamily. Tyr protein kinase family. Insulin receptor subfamily. As to expression, expressed in bone marrow, spleen, bursa, thymus and brain. Weakly expressed in fibroblasts. Also expressed in embryonic liver.

It is found in the membrane. Its function is as follows. Inactive tyrosine kinase involved in Wnt signaling. pathway. The polypeptide is Inactive tyrosine-protein kinase 7 (PTK7) (Gallus gallus (Chicken)).